A 199-amino-acid chain; its full sequence is NAD(P)H dehydrogenase (quinone) (199 aa).

The 187-residue stretch at 4-190 (VLVLYYSTYG…DGARFLGQHV (187 aa)) folds into the Flavodoxin-like domain. FMN contacts are provided by residues 10-15 (STYGHI) and 78-80 (TRF). NAD(+) is bound at residue Tyr-12. Trp-98 lines the substrate pocket. FMN is bound by residues 113-119 (STATQHG) and His-134.

Belongs to the WrbA family. The cofactor is FMN.

The catalysed reaction is a quinone + NADH + H(+) = a quinol + NAD(+). It catalyses the reaction a quinone + NADPH + H(+) = a quinol + NADP(+). This is NAD(P)H dehydrogenase (quinone) from Gluconacetobacter diazotrophicus (strain ATCC 49037 / DSM 5601 / CCUG 37298 / CIP 103539 / LMG 7603 / PAl5).